Reading from the N-terminus, the 172-residue chain is Cytidylate kinase (172 aa).

7–15 (GLAGTGTTT) serves as a coordination point for ATP.

The protein belongs to the cytidylate kinase family. Type 2 subfamily.

It is found in the cytoplasm. The enzyme catalyses CMP + ATP = CDP + ADP. The catalysed reaction is dCMP + ATP = dCDP + ADP. The protein is Cytidylate kinase of Methanobrevibacter smithii (strain ATCC 35061 / DSM 861 / OCM 144 / PS).